We begin with the raw amino-acid sequence, 95 residues long: Co-chaperonin GroES (95 aa).

The protein belongs to the GroES chaperonin family. As to quaternary structure, heptamer of 7 subunits arranged in a ring. Interacts with the chaperonin GroEL.

It localises to the cytoplasm. In terms of biological role, together with the chaperonin GroEL, plays an essential role in assisting protein folding. The GroEL-GroES system forms a nano-cage that allows encapsulation of the non-native substrate proteins and provides a physical environment optimized to promote and accelerate protein folding. GroES binds to the apical surface of the GroEL ring, thereby capping the opening of the GroEL channel. This chain is Co-chaperonin GroES, found in Ruthia magnifica subsp. Calyptogena magnifica.